A 348-amino-acid polypeptide reads, in one-letter code: Histidinol-phosphate aminotransferase (348 aa).

Lys210 is modified (N6-(pyridoxal phosphate)lysine).

This sequence belongs to the class-II pyridoxal-phosphate-dependent aminotransferase family. Histidinol-phosphate aminotransferase subfamily. As to quaternary structure, homodimer. It depends on pyridoxal 5'-phosphate as a cofactor.

The enzyme catalyses L-histidinol phosphate + 2-oxoglutarate = 3-(imidazol-4-yl)-2-oxopropyl phosphate + L-glutamate. It functions in the pathway amino-acid biosynthesis; L-histidine biosynthesis; L-histidine from 5-phospho-alpha-D-ribose 1-diphosphate: step 7/9. This Pseudomonas putida (strain ATCC 47054 / DSM 6125 / CFBP 8728 / NCIMB 11950 / KT2440) protein is Histidinol-phosphate aminotransferase.